We begin with the raw amino-acid sequence, 74 residues long: Translation initiation factor IF-1, chloroplastic (74 aa).

Positions 1–72 (MEKQNIIEME…TKGRITYRLR (72 aa)) constitute an S1-like domain.

Belongs to the IF-1 family. In terms of assembly, component of the 30S ribosomal translation pre-initiation complex which assembles on the 30S ribosome in the order IF-2 and IF-3, IF-1 and N-formylmethionyl-tRNA(fMet); mRNA recruitment can occur at any time during PIC assembly.

Its subcellular location is the plastid. It localises to the chloroplast. One of the essential components for the initiation of protein synthesis. Stabilizes the binding of IF-2 and IF-3 on the 30S subunit to which N-formylmethionyl-tRNA(fMet) subsequently binds. Helps modulate mRNA selection, yielding the 30S pre-initiation complex (PIC). Upon addition of the 50S ribosomal subunit IF-1, IF-2 and IF-3 are released leaving the mature 70S translation initiation complex. This is Translation initiation factor IF-1, chloroplastic from Chlorokybus atmophyticus (Soil alga).